Consider the following 252-residue polypeptide: Mediator of RNA polymerase II transcription subunit 4 (252 aa).

Positions 70–112 (KIHQEMQVLEKEVEKRDSDIQQLQKQLKEAEHILATAVYQAKE) form a coiled coil. Residues 218-252 (HSNEFLMESLGPNKENEEDVEVMSTDSSSSSSDSD) are disordered. Low complexity predominate over residues 241 to 252 (STDSSSSSSDSD).

This sequence belongs to the Mediator complex subunit 4 family. In terms of assembly, component of the Mediator complex.

The protein resides in the nucleus. Component of the Mediator complex, a coactivator involved in the regulated transcription of nearly all RNA polymerase II-dependent genes. Mediator functions as a bridge to convey information from gene-specific regulatory proteins to the basal RNA polymerase II transcription machinery. Mediator is recruited to promoters by direct interactions with regulatory proteins and serves as a scaffold for the assembly of a functional preinitiation complex with RNA polymerase II and the general transcription factors. This chain is Mediator of RNA polymerase II transcription subunit 4 (med4), found in Xenopus tropicalis (Western clawed frog).